We begin with the raw amino-acid sequence, 463 residues long: Probable diacyglycerol O-acyltransferase tgs1 (463 aa).

Methionine 1 is subject to N-acetylmethionine. Histidine 137 functions as the Proton acceptor in the catalytic mechanism.

It belongs to the long-chain O-acyltransferase family.

It catalyses the reaction an acyl-CoA + a 1,2-diacyl-sn-glycerol = a triacyl-sn-glycerol + CoA. The catalysed reaction is di-(9Z)-octadecenoylglycerol + (9Z)-octadecenoyl-CoA = 1,2,3-tri-(9Z-octadecenoyl)-glycerol + CoA. It participates in glycerolipid metabolism; triacylglycerol biosynthesis. Catalyzes the terminal and only committed step in triacylglycerol synthesis by using diacylglycerol and fatty acyl CoA as substrates. Required for storage lipid synthesis. Its function is as follows. Upon expression in E.coli functions as a triacylglycerol synthase, making triacylglycerol (TG) from diolein and long-chain fatty acyl-CoA. Prefers C(26:0)-CoA over C(18:1)-CoA. TG synthesis activity increases in M.tuberculosis upon oxygen depletion and NO treatment, with concomitant accumulation of TG in inclusion bodies. As disruption of the gene encoding this protein obviates TG synthesis this seems to be the major enzyme involved in production of TG. Has no wax synthase activity to produce wax esters. In Mycobacterium tuberculosis (strain ATCC 25618 / H37Rv), this protein is Probable diacyglycerol O-acyltransferase tgs1 (tgs1).